Reading from the N-terminus, the 112-residue chain is Ribonuclease VapC8 (112 aa).

The PINc domain occupies L10 to E109. Mg(2+) contacts are provided by D12 and D101.

It belongs to the PINc/VapC protein family. Mg(2+) is required as a cofactor.

Functionally, toxic component of a type II toxin-antitoxin (TA) system. An RNase. The cognate antitoxin is VapB8. The chain is Ribonuclease VapC8 (vapC8) from Mycobacterium tuberculosis (strain CDC 1551 / Oshkosh).